A 259-amino-acid polypeptide reads, in one-letter code: 5'-nucleotidase SurE (259 aa).

Residues Asp8, Asp9, Ser39, and Asn98 each coordinate a divalent metal cation.

The protein belongs to the SurE nucleotidase family. Requires a divalent metal cation as cofactor.

The protein localises to the cytoplasm. It catalyses the reaction a ribonucleoside 5'-phosphate + H2O = a ribonucleoside + phosphate. In terms of biological role, nucleotidase that shows phosphatase activity on nucleoside 5'-monophosphates. In Fervidobacterium nodosum (strain ATCC 35602 / DSM 5306 / Rt17-B1), this protein is 5'-nucleotidase SurE.